We begin with the raw amino-acid sequence, 124 residues long: Anamorsin homolog (124 aa).

The span at 1–20 (MSSPAPSTSHNAANSTQAFS) shows a compositional bias: polar residues. Disordered stretches follow at residues 1–39 (MSSP…EDRE) and 40–124 (AKST…TDDI). [2Fe-2S] cluster contacts are provided by Cys49, Cys56, Cys59, and Cys61. A fe-S binding site A region spans residues 49–61 (CATRRRACKNCTC). Residues Cys86, Cys89, Cys97, and Cys100 each coordinate [4Fe-4S] cluster. Short sequence motifs (cx2C motif) lie at residues 86–89 (CGNC) and 97–100 (CAGC). The segment at 86–100 (CGNCAKGDAFRCAGC) is fe-S binding site B.

It belongs to the anamorsin family. In terms of assembly, monomer. It depends on [2Fe-2S] cluster as a cofactor. [4Fe-4S] cluster serves as cofactor.

The protein localises to the cytoplasm. It is found in the mitochondrion intermembrane space. Its function is as follows. Component of the cytosolic iron-sulfur (Fe-S) protein assembly (CIA) machinery. Required for the maturation of extramitochondrial Fe-S proteins. Part of an electron transfer chain functioning in an early step of cytosolic Fe-S biogenesis, facilitating the de novo assembly of a [4Fe-4S] cluster on the cytosolic Fe-S scaffold complex. Electrons are transferred from NADPH via a FAD- and FMN-containing diflavin oxidoreductase. Together with the diflavin oxidoreductase, also required for the assembly of the diferric tyrosyl radical cofactor of ribonucleotide reductase (RNR), probably by providing electrons for reduction during radical cofactor maturation in the catalytic small subunit. The protein is Anamorsin homolog of Trypanosoma brucei brucei (strain 927/4 GUTat10.1).